Reading from the N-terminus, the 88-residue chain is MKEGIHPDYREVLFIDVSNDFKFVTRSTIQTRETAEFEGKTYPLAKIEVSSESHPFYTGQQKIMDTAGRVEKFRNKFGSRATGKVAAK.

Belongs to the bacterial ribosomal protein bL31 family. Type B subfamily. In terms of assembly, part of the 50S ribosomal subunit.

The chain is Large ribosomal subunit protein bL31B from Paraburkholderia xenovorans (strain LB400).